A 79-amino-acid polypeptide reads, in one-letter code: ATP synthase subunit c (79 aa).

The next 2 membrane-spanning stretches (helical) occupy residues 11–31 (MAAA…IGIL) and 53–73 (FFIV…LGLY).

The protein belongs to the ATPase C chain family. F-type ATPases have 2 components, F(1) - the catalytic core - and F(0) - the membrane proton channel. F(1) has five subunits: alpha(3), beta(3), gamma(1), delta(1), epsilon(1). F(0) has three main subunits: a(1), b(2) and c(10-14). The alpha and beta chains form an alternating ring which encloses part of the gamma chain. F(1) is attached to F(0) by a central stalk formed by the gamma and epsilon chains, while a peripheral stalk is formed by the delta and b chains.

Its subcellular location is the cell inner membrane. Functionally, f(1)F(0) ATP synthase produces ATP from ADP in the presence of a proton or sodium gradient. F-type ATPases consist of two structural domains, F(1) containing the extramembraneous catalytic core and F(0) containing the membrane proton channel, linked together by a central stalk and a peripheral stalk. During catalysis, ATP synthesis in the catalytic domain of F(1) is coupled via a rotary mechanism of the central stalk subunits to proton translocation. Key component of the F(0) channel; it plays a direct role in translocation across the membrane. A homomeric c-ring of between 10-14 subunits forms the central stalk rotor element with the F(1) delta and epsilon subunits. This Pectobacterium atrosepticum (strain SCRI 1043 / ATCC BAA-672) (Erwinia carotovora subsp. atroseptica) protein is ATP synthase subunit c.